The chain runs to 121 residues: Small ribosomal subunit protein uS13 (121 aa).

The segment at 91-121 (HRMSLPVRGQRTRTNARTRRGSRKTVAGRKK) is disordered. Positions 100-121 (QRTRTNARTRRGSRKTVAGRKK) are enriched in basic residues.

The protein belongs to the universal ribosomal protein uS13 family. Part of the 30S ribosomal subunit. Forms a loose heterodimer with protein S19. Forms two bridges to the 50S subunit in the 70S ribosome.

Functionally, located at the top of the head of the 30S subunit, it contacts several helices of the 16S rRNA. In the 70S ribosome it contacts the 23S rRNA (bridge B1a) and protein L5 of the 50S subunit (bridge B1b), connecting the 2 subunits; these bridges are implicated in subunit movement. Contacts the tRNAs in the A and P-sites. This is Small ribosomal subunit protein uS13 from Prochlorococcus marinus (strain MIT 9312).